The sequence spans 100 residues: Large ribosomal subunit protein uL23 (100 aa).

Belongs to the universal ribosomal protein uL23 family. In terms of assembly, part of the 50S ribosomal subunit. Contacts protein L29, and trigger factor when it is bound to the ribosome.

Functionally, one of the early assembly proteins it binds 23S rRNA. One of the proteins that surrounds the polypeptide exit tunnel on the outside of the ribosome. Forms the main docking site for trigger factor binding to the ribosome. In Yersinia pestis bv. Antiqua (strain Antiqua), this protein is Large ribosomal subunit protein uL23.